Reading from the N-terminus, the 876-residue chain is Alanine--tRNA ligase (876 aa).

Zn(2+) is bound by residues H565, H569, C667, and H671.

This sequence belongs to the class-II aminoacyl-tRNA synthetase family. Zn(2+) serves as cofactor.

It is found in the cytoplasm. It catalyses the reaction tRNA(Ala) + L-alanine + ATP = L-alanyl-tRNA(Ala) + AMP + diphosphate. In terms of biological role, catalyzes the attachment of alanine to tRNA(Ala) in a two-step reaction: alanine is first activated by ATP to form Ala-AMP and then transferred to the acceptor end of tRNA(Ala). Also edits incorrectly charged Ser-tRNA(Ala) and Gly-tRNA(Ala) via its editing domain. In Staphylococcus aureus (strain bovine RF122 / ET3-1), this protein is Alanine--tRNA ligase.